The sequence spans 53 residues: UPF0391 membrane protein Bmul_5473/BMULJ_06024 (53 aa).

A run of 2 helical transmembrane segments spans residues 5–25 and 30–50; these read ALIFFVIAIIAAVFGFGGIAA and IAKILFYIFVVIFLVTLLLGV.

The protein belongs to the UPF0391 family.

It localises to the cell membrane. The protein is UPF0391 membrane protein Bmul_5473/BMULJ_06024 of Burkholderia multivorans (strain ATCC 17616 / 249).